Reading from the N-terminus, the 501-residue chain is Probable cytochrome P450 6t3 (501 aa).

Cys-444 provides a ligand contact to heme.

Belongs to the cytochrome P450 family. Requires heme as cofactor.

Its subcellular location is the endoplasmic reticulum membrane. It is found in the microsome membrane. Functionally, may be involved in the metabolism of insect hormones and in the breakdown of synthetic insecticides. The sequence is that of Probable cytochrome P450 6t3 (Cyp6t3) from Drosophila melanogaster (Fruit fly).